An 853-amino-acid polypeptide reads, in one-letter code: Protein translocase subunit SecA (853 aa).

ATP-binding positions include glutamine 77, 95 to 99 (GEGKT), and aspartate 532.

The protein belongs to the SecA family. In terms of assembly, monomer and homodimer. Part of the essential Sec protein translocation apparatus which comprises SecA, SecYEG and auxiliary proteins SecDF. Other proteins may also be involved.

The protein localises to the cell inner membrane. Its subcellular location is the cytoplasm. The enzyme catalyses ATP + H2O + cellular proteinSide 1 = ADP + phosphate + cellular proteinSide 2.. Its function is as follows. Part of the Sec protein translocase complex. Interacts with the SecYEG preprotein conducting channel. Has a central role in coupling the hydrolysis of ATP to the transfer of proteins into and across the cell membrane, serving as an ATP-driven molecular motor driving the stepwise translocation of polypeptide chains across the membrane. The sequence is that of Protein translocase subunit SecA from Thermosipho melanesiensis (strain DSM 12029 / CIP 104789 / BI429).